We begin with the raw amino-acid sequence, 92 residues long: Small ribosomal subunit protein uS19 (92 aa).

This sequence belongs to the universal ribosomal protein uS19 family.

Its function is as follows. Protein S19 forms a complex with S13 that binds strongly to the 16S ribosomal RNA. The protein is Small ribosomal subunit protein uS19 of Lactococcus lactis subsp. cremoris (strain MG1363).